Here is a 435-residue protein sequence, read N- to C-terminus: Serine--tRNA ligase (435 aa).

Position 242 to 244 (242 to 244 (TAE)) interacts with L-serine. 273–275 (RSE) provides a ligand contact to ATP. Position 296 (glutamate 296) interacts with L-serine. 360-363 (EISS) serves as a coordination point for ATP. Residue serine 396 participates in L-serine binding.

This sequence belongs to the class-II aminoacyl-tRNA synthetase family. Type-1 seryl-tRNA synthetase subfamily. Homodimer. The tRNA molecule binds across the dimer.

The protein resides in the cytoplasm. It carries out the reaction tRNA(Ser) + L-serine + ATP = L-seryl-tRNA(Ser) + AMP + diphosphate + H(+). It catalyses the reaction tRNA(Sec) + L-serine + ATP = L-seryl-tRNA(Sec) + AMP + diphosphate + H(+). Its pathway is aminoacyl-tRNA biosynthesis; selenocysteinyl-tRNA(Sec) biosynthesis; L-seryl-tRNA(Sec) from L-serine and tRNA(Sec): step 1/1. Its function is as follows. Catalyzes the attachment of serine to tRNA(Ser). Is also able to aminoacylate tRNA(Sec) with serine, to form the misacylated tRNA L-seryl-tRNA(Sec), which will be further converted into selenocysteinyl-tRNA(Sec). In Vibrio atlanticus (strain LGP32) (Vibrio splendidus (strain Mel32)), this protein is Serine--tRNA ligase.